The chain runs to 394 residues: Exodeoxyribonuclease 7 large subunit (394 aa).

Belongs to the XseA family. In terms of assembly, heterooligomer composed of large and small subunits.

Its subcellular location is the cytoplasm. The catalysed reaction is Exonucleolytic cleavage in either 5'- to 3'- or 3'- to 5'-direction to yield nucleoside 5'-phosphates.. In terms of biological role, bidirectionally degrades single-stranded DNA into large acid-insoluble oligonucleotides, which are then degraded further into small acid-soluble oligonucleotides. The protein is Exodeoxyribonuclease 7 large subunit of Thermotoga petrophila (strain ATCC BAA-488 / DSM 13995 / JCM 10881 / RKU-1).